Reading from the N-terminus, the 37-residue chain is Large ribosomal subunit protein bL36 (37 aa).

This sequence belongs to the bacterial ribosomal protein bL36 family.

The protein is Large ribosomal subunit protein bL36 of Azoarcus sp. (strain BH72).